A 444-amino-acid polypeptide reads, in one-letter code: Protein CPn_0808/CP_1063/CPj0808/CpB0837 (444 aa).

Residues 1–13 are compositionally biased toward polar residues; the sequence is MTSGVSGSSSQDP. The interval 1–124 is disordered; it reads MTSGVSGSSS…NNYDSPSLPT (124 aa). Residues 15–24 show a composition bias toward low complexity; that stretch reads LAAQLAQSSQ. Polar residues predominate over residues 25-42; sequence KAGNAQSGHDTKNVTKQG. A compositionally biased stretch (basic and acidic residues) spans 77–86; it reads SKGEKSEKSG. The span at 88–103 shows a compositional bias: low complexity; that stretch reads SKSSTSVASASETATA. Positions 113-124 are enriched in polar residues; it reads RQNNYDSPSLPT.

Belongs to the chlamydial CPn_0808/CT_579/TC_0868 family.

This Chlamydia pneumoniae (Chlamydophila pneumoniae) protein is Protein CPn_0808/CP_1063/CPj0808/CpB0837.